A 466-amino-acid chain; its full sequence is Purple acid phosphatase 6 (466 aa).

Positions 1-20 are cleaved as a signal peptide; it reads MKNLVIFAFLFLSITTVING. Asn-88 carries an N-linked (GlcNAc...) asparagine glycan. Position 164 (Asp-164) interacts with Fe cation. The N-linked (GlcNAc...) asparagine glycan is linked to Asn-172. Fe cation-binding residues include Asp-192 and Tyr-195. Residue Asp-192 participates in Zn(2+) binding. Residues Asn-229 and His-314 each coordinate Zn(2+). Residue Asn-229 coordinates substrate. His-324 (proton donor) is an active-site residue. His-351 is a Zn(2+) binding site. 351 to 353 is a substrate binding site; sequence HVH. Residue His-353 participates in Fe cation binding. 2 N-linked (GlcNAc...) asparagine glycosylation sites follow: Asn-367 and Asn-424.

It belongs to the metallophosphoesterase superfamily. Purple acid phosphatase family. Homodimer. Fe cation serves as cofactor. It depends on Zn(2+) as a cofactor. In terms of tissue distribution, specifically expressed in flowers.

The protein localises to the secreted. The catalysed reaction is a phosphate monoester + H2O = an alcohol + phosphate. The chain is Purple acid phosphatase 6 (PAP6) from Arabidopsis thaliana (Mouse-ear cress).